A 339-amino-acid chain; its full sequence is Mitogen-activated protein kinase kinase kinase 18 (339 aa).

The Protein kinase domain occupies tryptophan 3–leucine 263. ATP-binding positions include leucine 9–valine 17 and lysine 32. The Proton acceptor role is filled by aspartate 131. Serine 301 carries the post-translational modification Phosphoserine.

Belongs to the protein kinase superfamily. Ser/Thr protein kinase family. In terms of assembly, interacts with ABI1. Binds to MKK3. Associates with SRK2E within the nucleus. Post-translationally, autophosphorylated. Unstable protein degraded by the proteasome pathway; this degradation is promoted by ABI1, but blocked by ABA. In terms of tissue distribution, expressed in roots, leaves and flowers.

The protein resides in the nucleus. The catalysed reaction is L-seryl-[protein] + ATP = O-phospho-L-seryl-[protein] + ADP + H(+). It catalyses the reaction L-threonyl-[protein] + ATP = O-phospho-L-threonyl-[protein] + ADP + H(+). Its activity is regulated as follows. Kinase activity is activated by abscisic acid (ABA). Inhibited by ABI1. Activated by SRK2E. In terms of biological role, component of the abscisic acid (ABA) signaling pathway that acts as ABA signal transducer in the context of abiotic stresses. Triggers MPK1, MPK2, MPK7 and MPK14 activation in a MKK3-dependent manner and MPK6 activation in a MKK3-independent manner. Mediates the ABA-dependent activation of the MKK3-MPK7 module. Positive regulator of ABA responses leading to the induction of gene expression (e.g. RD29B and RAB18) and involved in various responses including stomatal development, stomatal movement, inhibition of germination and root growth. Promotes leaf senescence. In Arabidopsis thaliana (Mouse-ear cress), this protein is Mitogen-activated protein kinase kinase kinase 18.